A 347-amino-acid chain; its full sequence is Protein RecA (347 aa).

Residue Gly-67 to Thr-74 coordinates ATP.

The protein belongs to the RecA family.

The protein localises to the cytoplasm. Its function is as follows. Can catalyze the hydrolysis of ATP in the presence of single-stranded DNA, the ATP-dependent uptake of single-stranded DNA by duplex DNA, and the ATP-dependent hybridization of homologous single-stranded DNAs. It interacts with LexA causing its activation and leading to its autocatalytic cleavage. The chain is Protein RecA from Paenarthrobacter aurescens (strain TC1).